The chain runs to 224 residues: TBP-related factor (224 aa).

The disordered stretch occupies residues 14–34 (RDNVAATSNAAANPHAALQPQ). Residues 17–34 (VAATSNAAANPHAALQPQ) are compositionally biased toward low complexity. 2 tandem repeats follow at residues 51-127 (LQNI…ARIL) and 141-218 (LQNI…SPIL).

This sequence belongs to the TBP family. Primary spermatocytes in the adult testis and in a subset of cells in the dorsal medial region of the embryonic CNS.

The protein resides in the nucleus. In terms of biological role, acts as a transcription factor. Binds to the TATA box promoter element which lies close to the position of transcription initiation. May be essential for embryonic development. In Drosophila melanogaster (Fruit fly), this protein is TBP-related factor (Trf).